The sequence spans 513 residues: Na(+)/H(+) antiporter NhaB (513 aa).

12 helical membrane-spanning segments follow: residues 23–43 (LALIIFLIVNPLIFLISPFVA), 52–72 (IFTLAMALKCYPLLPGGLLAI), 97–117 (LLLMFMVAGIYFMKQLLLFIF), 120–140 (LLLSIRSKMLLSLSFCVAAAF), 144–164 (FLDALTVVAVVISVAVGFYGI), 202–222 (LMMHAGVGTALGGVMTMVGEP), 238–258 (FFLRMSPVTVPVLICGLLTCL), 303–323 (AIIGVWLVTALALHLAEVGLI), 348–368 (TESLPFTALLTVFFSVVAVII), 391–411 (LFYIFNGLLSSISDNVFVGTI), 447–467 (ATPNGQAAFLFLLTSALAPLI), and 475–495 (VWMALPYTLVLTLVGLLCVEF).

The protein belongs to the NhaB Na(+)/H(+) (TC 2.A.34) antiporter family.

It localises to the cell inner membrane. It carries out the reaction 2 Na(+)(in) + 3 H(+)(out) = 2 Na(+)(out) + 3 H(+)(in). Na(+)/H(+) antiporter that extrudes sodium in exchange for external protons. The chain is Na(+)/H(+) antiporter NhaB from Shigella sonnei (strain Ss046).